Consider the following 1216-residue polypeptide: Sodium/potassium/calcium exchanger 1 (1216 aa).

Topologically, residues 1-446 are extracellular; the sequence is MGKLIRMGAQ…DLFSVEERRQ (446 aa). Residues 94-196 are disordered; sequence EATAGRDGTP…KYSPSPLGRM (103 aa). 2 stretches are compositionally biased toward polar residues: residues 110–135 and 144–166; these read NTPSTPRGTASITPAIPNNYSPTPTG and SATPSGVLNHYTQSRPMVNSYTR. N-linked (GlcNAc...) asparagine glycosylation is found at asparagine 290 and asparagine 303. The chain crosses the membrane as a helical span at residues 447 to 467; that stretch reads GWVVLHIFGMMYVFVALAIVC. Topologically, residues 468–491 are cytoplasmic; it reads DEYFVPALGVITDKLQISEDVAGA. One copy of the Alpha-1 repeat lies at 488–528; the sequence is VAGATFMAAGGSAPELFTSLIGVFISHSNVGIGTIVGSAVF. The helical transmembrane segment at 492 to 512 threads the bilayer; that stretch reads TFMAAGGSAPELFTSLIGVFI. Topologically, residues 513–518 are extracellular; that stretch reads SHSNVG. The helical transmembrane segment at 519–539 threads the bilayer; it reads IGTIVGSAVFNILFVIGTCAL. Residues 540–557 are Cytoplasmic-facing; that stretch reads FSREILNLTWWPLFRDIT. A helical membrane pass occupies residues 558–578; that stretch reads FYIFDLMMLILFFLDSLIAWW. Position 579 (glutamate 579) is a topological domain, extracellular. A helical membrane pass occupies residues 580–600; sequence SVLLLLAYAFYVFTMKWNQQL. The Cytoplasmic portion of the chain corresponds to 601–1024; that stretch reads ELWVKEQLNK…SLEWPETRRK (424 aa). Serine 652 carries the phosphoserine modification. The interval 677-1018 is disordered; sequence GEARPSKDKE…ENEQPLSLEW (342 aa). Positions 702–712 are enriched in basic and acidic residues; it reads AESKPEEEPAK. Phosphothreonine is present on threonine 717. A 1; approximate repeat occupies 796–811; sequence DEDEGEIQAEGGEVKG. Positions 796–928 are 8 X 17 AA tandem repeats of D-E-D-E-G-E-I-Q-A-G-E-[GA]-G-E-V-[EK]-G; the sequence is DEDEGEIQAE…QAGEAGEVEG (133 aa). 6 tandem repeats follow at residues 812 to 828, 829 to 845, 846 to 862, 863 to 879, 880 to 896, and 897 to 913. Composition is skewed to acidic residues over residues 824–834, 841–851, 858–868, 875–885, 892–902, 924–941, and 981–1011; these read GEVEGDEDEGE, GEVEGEDGEVEGGEDEGE, and GDSEDEEEEDEEEEDEEEEEEEEEEEEEENE. One copy of the 8; approximate repeat lies at 914–928; sequence DEGEIQAGEAGEVEG. Residues 1025–1045 traverse the membrane as a helical segment; it reads QAIYLFLLPIVFPLWLTVPDV. Residues 1046–1052 lie on the Extracellular side of the membrane; the sequence is RRLEAKK. The chain crosses the membrane as a helical span at residues 1053–1073; that stretch reads FFVITFLGSILWIAMFSYLMV. Residues 1074 to 1088 are Cytoplasmic-facing; it reads WWAHQVGETIGISEE. Residues 1089-1109 traverse the membrane as a helical segment; sequence IMGLTILAAGTSIPDLITSVI. One copy of the Alpha-2 repeat lies at 1096–1127; it reads AAGTSIPDLITSVIVARKGLGDMAVSSSVGSN. At 1110–1127 the chain is on the extracellular side; it reads VARKGLGDMAVSSSVGSN. Residues 1128–1148 traverse the membrane as a helical segment; that stretch reads IFDITVGLPLPWMLFSLINGL. The Cytoplasmic segment spans residues 1149–1157; it reads QPVAVSSNG. Residues 1158–1178 traverse the membrane as a helical segment; the sequence is LFCAIVLLFLMLLFVISSIAL. The Extracellular portion of the chain corresponds to 1179-1185; it reads CKWRMNK. Residues 1186-1206 traverse the membrane as a helical segment; the sequence is ILGFTMFLLYFVFLIISVMLE. The Cytoplasmic segment spans residues 1207-1216; that stretch reads DRIISCPVSV.

It belongs to the Ca(2+):cation antiporter (CaCA) (TC 2.A.19) family. SLC24A subfamily. Post-translationally, the uncleaved signal sequence is required for efficient membrane targeting and proper membrane integration and topology. In terms of processing, glycosylated. Retina.

The protein resides in the cell membrane. The catalysed reaction is Ca(2+)(out) + K(+)(out) + 4 Na(+)(in) = Ca(2+)(in) + K(+)(in) + 4 Na(+)(out). Its function is as follows. Calcium, potassium:sodium antiporter that transports 1 Ca(2+) and 1 K(+) in exchange for 4 Na(+). Critical component of the visual transduction cascade, controlling the calcium concentration of outer segments during light and darkness. Light causes a rapid lowering of cytosolic free calcium in the outer segment of both retinal rod and cone photoreceptors and the light-induced lowering of calcium is caused by extrusion via this protein which plays a key role in the process of light adaptation. The chain is Sodium/potassium/calcium exchanger 1 (SLC24A1) from Bos taurus (Bovine).